The sequence spans 1015 residues: Transposase for transposon Tn3 (1015 aa).

This sequence belongs to the transposase 7 family.

In terms of biological role, required for transposition of transposon Tn3. The chain is Transposase for transposon Tn3 (tnpA) from Escherichia coli.